The chain runs to 329 residues: Glycerol-3-phosphate dehydrogenase [NAD(P)+] (329 aa).

Positions 11, 30, and 103 each coordinate NADPH. Sn-glycerol 3-phosphate is bound by residues lysine 103, glycine 132, and serine 134. Alanine 136 serves as a coordination point for NADPH. Positions 187, 240, 250, 251, and 252 each coordinate sn-glycerol 3-phosphate. Lysine 187 acts as the Proton acceptor in catalysis. NADPH is bound at residue arginine 251. NADPH contacts are provided by valine 275 and glutamate 277.

The protein belongs to the NAD-dependent glycerol-3-phosphate dehydrogenase family.

The protein localises to the cytoplasm. It carries out the reaction sn-glycerol 3-phosphate + NAD(+) = dihydroxyacetone phosphate + NADH + H(+). It catalyses the reaction sn-glycerol 3-phosphate + NADP(+) = dihydroxyacetone phosphate + NADPH + H(+). The protein operates within membrane lipid metabolism; glycerophospholipid metabolism. In terms of biological role, catalyzes the reduction of the glycolytic intermediate dihydroxyacetone phosphate (DHAP) to sn-glycerol 3-phosphate (G3P), the key precursor for phospholipid synthesis. This chain is Glycerol-3-phosphate dehydrogenase [NAD(P)+], found in Nitrosomonas europaea (strain ATCC 19718 / CIP 103999 / KCTC 2705 / NBRC 14298).